We begin with the raw amino-acid sequence, 161 residues long: Phosphopantetheine adenylyltransferase (161 aa).

Serine 8 is a substrate binding site. Residues 8 to 9 (SF) and histidine 16 contribute to the ATP site. Substrate-binding residues include lysine 40, threonine 72, and arginine 86. ATP is bound by residues 87–89 (GLR), glutamate 97, and 122–128 (HSFLSSS).

This sequence belongs to the bacterial CoaD family. In terms of assembly, homohexamer. The cofactor is Mg(2+).

It localises to the cytoplasm. The catalysed reaction is (R)-4'-phosphopantetheine + ATP + H(+) = 3'-dephospho-CoA + diphosphate. It participates in cofactor biosynthesis; coenzyme A biosynthesis; CoA from (R)-pantothenate: step 4/5. In terms of biological role, reversibly transfers an adenylyl group from ATP to 4'-phosphopantetheine, yielding dephospho-CoA (dPCoA) and pyrophosphate. The protein is Phosphopantetheine adenylyltransferase of Gloeobacter violaceus (strain ATCC 29082 / PCC 7421).